The sequence spans 867 residues: Valine--tRNA ligase (867 aa).

Positions 42–52 (PNITGKIHMGH) match the 'HIGH' region motif. Residues 521 to 525 (KMSKS) carry the 'KMSKS' region motif. Lys524 contacts ATP. Residues 794-867 (LGTLIDVKSE…QIISDLEAKA (74 aa)) are a coiled coil.

The protein belongs to the class-I aminoacyl-tRNA synthetase family. ValS type 1 subfamily. In terms of assembly, monomer.

Its subcellular location is the cytoplasm. It catalyses the reaction tRNA(Val) + L-valine + ATP = L-valyl-tRNA(Val) + AMP + diphosphate. Functionally, catalyzes the attachment of valine to tRNA(Val). As ValRS can inadvertently accommodate and process structurally similar amino acids such as threonine, to avoid such errors, it has a 'posttransfer' editing activity that hydrolyzes mischarged Thr-tRNA(Val) in a tRNA-dependent manner. The sequence is that of Valine--tRNA ligase from Fervidobacterium nodosum (strain ATCC 35602 / DSM 5306 / Rt17-B1).